A 336-amino-acid polypeptide reads, in one-letter code: Methionyl-tRNA formyltransferase (336 aa).

(6S)-5,6,7,8-tetrahydrofolate is bound at residue 112–115 (SILP).

It belongs to the Fmt family.

The enzyme catalyses L-methionyl-tRNA(fMet) + (6R)-10-formyltetrahydrofolate = N-formyl-L-methionyl-tRNA(fMet) + (6S)-5,6,7,8-tetrahydrofolate + H(+). Functionally, attaches a formyl group to the free amino group of methionyl-tRNA(fMet). The formyl group appears to play a dual role in the initiator identity of N-formylmethionyl-tRNA by promoting its recognition by IF2 and preventing the misappropriation of this tRNA by the elongation apparatus. In Trichodesmium erythraeum (strain IMS101), this protein is Methionyl-tRNA formyltransferase.